The chain runs to 434 residues: D-inositol 3-phosphate glycosyltransferase (434 aa).

Residue histidine 26 coordinates 1D-myo-inositol 3-phosphate. Residues 32-33 (QP) and glycine 40 each bind UDP-N-acetyl-alpha-D-glucosamine. 1D-myo-inositol 3-phosphate contacts are provided by residues 37–42 (DAGGMN), lysine 95, tyrosine 128, threonine 152, and arginine 172. UDP-N-acetyl-alpha-D-glucosamine-binding residues include arginine 246 and lysine 251. 3 residues coordinate Mg(2+): tyrosine 321, arginine 322, and alanine 324. 2 residues coordinate UDP-N-acetyl-alpha-D-glucosamine: glutamate 334 and glutamate 342. Residue threonine 348 coordinates Mg(2+).

The protein belongs to the glycosyltransferase group 1 family. MshA subfamily. As to quaternary structure, homodimer.

The catalysed reaction is 1D-myo-inositol 3-phosphate + UDP-N-acetyl-alpha-D-glucosamine = 1D-myo-inositol 2-acetamido-2-deoxy-alpha-D-glucopyranoside 3-phosphate + UDP + H(+). Its function is as follows. Catalyzes the transfer of a N-acetyl-glucosamine moiety to 1D-myo-inositol 3-phosphate to produce 1D-myo-inositol 2-acetamido-2-deoxy-glucopyranoside 3-phosphate in the mycothiol biosynthesis pathway. The chain is D-inositol 3-phosphate glycosyltransferase from Thermobifida fusca (strain YX).